Consider the following 20-residue polypeptide: Toxin TpF21-Cocle (20 aa).

An LCN-type CS-alpha/beta domain is found at 1–20; the sequence is KDGYLVGNDGCKYSCNTYPK.

Belongs to the long (4 C-C) scorpion toxin superfamily. Sodium channel inhibitor family. Beta subfamily. Expressed by the venom gland.

Its subcellular location is the secreted. Beta toxins bind voltage-independently at site-4 of sodium channels (Nav) and shift the voltage of activation toward more negative potentials thereby affecting sodium channel activation and promoting spontaneous and repetitive firing. This Tityus pachyurus (Colombian scorpion) protein is Toxin TpF21-Cocle.